The chain runs to 955 residues: MTRKNTTTNPWAKFHGPNLGYVIEQYDLYVTGAGSVDPELQELFEIFGAPSFQDDVVTGDNTATHFSPQNTGNIEKILKVVQLVEQIRSFGHTLAHINPMEDAANGQSLLEKAMNELSDADLKAIPAKTVWQDAPEGIHTALDVIHRLKDVYTKSLAYEFSHIQDSEERTWLHQMVESNSLRQPLSNKKRTALLKRLTAVEGFEQFLHKTFVGQKRFSIEGVDMLVPVLDEIVLEGAKNGVEDVMIGMAHRGRLSVLAHVLEKPYSHMFAEFKHAKIEGAVANSGWTGDVKYHLGREQVVSNEEVSTRVTLANNPSHLEFVNPVVEGFARAAQENRKKSGLPDQDISKSFVILVHGDAAFPGQGIVSETLNLSRLNAYQTGGTIHVIANNAVGFTTDSYDSRSTKYSSDLAKGFDIPIVHVNADDPEACLAAANLAIQYRMLFKKDFLIDLIGYRRYGHNEMDDPAVTQPQVYKKIKNHPTVRAIYADQLQAAGVLNADEVETITQFTQEQLKSDYAQVPPADTSDATIHVKVPDVVAKGIQPIDTGVEIDSLRAINEGLLSWPEGFNVYPKVKKILERRKDALEENGKIEWALAESLAFASILQEGTPIRLTGQDSQRGTFAHRHIVLHDTDTNETYSPLHRLPNINASFSVHNSPLSEAAVVGYEYGYNVFAPETLVMWEAQYGDFSNTAQALFDQYVSAGRAKWGQKSGLVLLLPHGYEGQGPEHSSARPERFLQLAAENNWTVANLTSAAQYFHILRRQASILGTEAVRPLVLMTPKSLLRHPLTLSTASQLSEGRFQPALEQENLGTKPNKVKRLVLSTGKMAIDLAAEIESGKHEYNLDEVHVVRIEQLYPFPAEKVQSIIKRFKNLEEIIWVQEEPRNMGAWHYMAPILFELAGDKVKTGYIGRPDRSSPSGGDPFAHKAEQELIVAHALDVKYNFRQDKQEIEVFSN.

The protein belongs to the alpha-ketoglutarate dehydrogenase family. Homodimer. Part of the 2-oxoglutarate dehydrogenase (OGDH) complex composed of E1 (2-oxoglutarate dehydrogenase), E2 (dihydrolipoamide succinyltransferase) and E3 (dihydrolipoamide dehydrogenase); the complex contains multiple copies of the three enzymatic components (E1, E2 and E3). Thiamine diphosphate serves as cofactor.

The catalysed reaction is N(6)-[(R)-lipoyl]-L-lysyl-[protein] + 2-oxoglutarate + H(+) = N(6)-[(R)-S(8)-succinyldihydrolipoyl]-L-lysyl-[protein] + CO2. Its function is as follows. E1 component of the 2-oxoglutarate dehydrogenase (OGDH) complex which catalyzes the decarboxylation of 2-oxoglutarate, the first step in the conversion of 2-oxoglutarate to succinyl-CoA and CO(2). The protein is 2-oxoglutarate dehydrogenase E1 component of Bacillus cereus (strain G9842).